The primary structure comprises 472 residues: Glutamate--tRNA ligase (472 aa).

The short motif at 10 to 20 (PSPTGYLHVGG) is the 'HIGH' region element. Zn(2+) contacts are provided by Cys-99, Cys-101, Cys-126, and Asp-128. Residues 238-242 (KLSKR) carry the 'KMSKS' region motif. Lys-241 is an ATP binding site.

This sequence belongs to the class-I aminoacyl-tRNA synthetase family. Glutamate--tRNA ligase type 1 subfamily. Monomer. The cofactor is Zn(2+).

It localises to the cytoplasm. It catalyses the reaction tRNA(Glu) + L-glutamate + ATP = L-glutamyl-tRNA(Glu) + AMP + diphosphate. In terms of biological role, catalyzes the attachment of glutamate to tRNA(Glu) in a two-step reaction: glutamate is first activated by ATP to form Glu-AMP and then transferred to the acceptor end of tRNA(Glu). This is Glutamate--tRNA ligase from Photorhabdus laumondii subsp. laumondii (strain DSM 15139 / CIP 105565 / TT01) (Photorhabdus luminescens subsp. laumondii).